We begin with the raw amino-acid sequence, 173 residues long: Transcription factor E (173 aa).

Positions 3 to 88 (NNPIIQQVLL…TWRATFTKLP (86 aa)) constitute an HTH TFE/IIEalpha-type domain.

Belongs to the TFE family. In terms of assembly, monomer. Interaction with RNA polymerase subunits RpoF and RpoE is necessary for Tfe stimulatory transcription activity. Able to interact with Tbp and RNA polymerase in the absence of DNA promoter. Interacts both with the preinitiation and elongation complexes.

Functionally, transcription factor that plays a role in the activation of archaeal genes transcribed by RNA polymerase. Facilitates transcription initiation by enhancing TATA-box recognition by TATA-box-binding protein (Tbp), and transcription factor B (Tfb) and RNA polymerase recruitment. Not absolutely required for transcription in vitro, but particularly important in cases where Tbp or Tfb function is not optimal. It dynamically alters the nucleic acid-binding properties of RNA polymerases by stabilizing the initiation complex and destabilizing elongation complexes. Seems to translocate with the RNA polymerase following initiation and acts by binding to the non template strand of the transcription bubble in elongation complexes. In Methanococcus aeolicus (strain ATCC BAA-1280 / DSM 17508 / OCM 812 / Nankai-3), this protein is Transcription factor E.